The primary structure comprises 368 residues: DNA replication and repair protein RecF (368 aa).

30–37 contacts ATP; sequence GNNAQGKT.

The protein belongs to the RecF family.

The protein resides in the cytoplasm. Its function is as follows. The RecF protein is involved in DNA metabolism; it is required for DNA replication and normal SOS inducibility. RecF binds preferentially to single-stranded, linear DNA. It also seems to bind ATP. In Streptococcus pyogenes serotype M4 (strain MGAS10750), this protein is DNA replication and repair protein RecF.